The primary structure comprises 168 residues: Ribosome maturation factor RimM (168 aa).

Positions Glu-95–Leu-166 constitute a PRC barrel domain.

Belongs to the RimM family. Binds ribosomal protein uS19.

Its subcellular location is the cytoplasm. An accessory protein needed during the final step in the assembly of 30S ribosomal subunit, possibly for assembly of the head region. Essential for efficient processing of 16S rRNA. May be needed both before and after RbfA during the maturation of 16S rRNA. It has affinity for free ribosomal 30S subunits but not for 70S ribosomes. The polypeptide is Ribosome maturation factor RimM (Staphylococcus saprophyticus subsp. saprophyticus (strain ATCC 15305 / DSM 20229 / NCIMB 8711 / NCTC 7292 / S-41)).